A 201-amino-acid polypeptide reads, in one-letter code: MSRYRGPRFKKIRRLGSLPGLTSKRPTVKSELRNQSRSSKKSQYRIRLEEKQKLRFHYGLTERQLLKYVRIAGKAKGSTGQVLLQLLEMRLDNILFRLGMAATIPQARQLINHRHVLVNGHIVDIPSYRCKPQDIITAKDEQKSKTLIQNYLDSAPREKLPNHLTLHPFQYKGLINQIIDNKWVGLKINELLVVEYYSRQT.

The segment at leucine 15–tyrosine 44 is disordered. Residues methionine 89–tyrosine 151 form the S4 RNA-binding domain.

Belongs to the universal ribosomal protein uS4 family. In terms of assembly, part of the 30S ribosomal subunit. Contacts protein S5. The interaction surface between S4 and S5 is involved in control of translational fidelity.

The protein resides in the plastid. It localises to the chloroplast. Its function is as follows. One of the primary rRNA binding proteins, it binds directly to 16S rRNA where it nucleates assembly of the body of the 30S subunit. With S5 and S12 plays an important role in translational accuracy. This Glycine max (Soybean) protein is Small ribosomal subunit protein uS4c (rps4).